Reading from the N-terminus, the 440-residue chain is MEQLARLYHDHIQVLNQRVSEIISRENLSGLVIHSGQPHRQFLDDMDYPFKVNPHFKAWLPVIENPNSWLVINGSDKPLLIFYRPVDFWHKVADEPSDFWAEHVDIKFLTKADKVAEYLPAGIDNWAYIGEHLDVADVLGFSRRNPDSVLSYLNYHRATKTDYELACMRKANEIAVTGHQAAKTAFYNGASEFEILQVYLSAISQGENQVPYSSIVALNENSAILHYTALEYTSPAQRRSFLIDAGANYNGYASDITRSYSFEKNIFDDLITAMDNMQLQIISMMKPGVSYAELHIQTHYKLAQILLDFDIVSGDVQGLVEQGITRVFFPHGLGHMLGIQVHDMGGFLSDEKGTHVAAPEAHPFLRCTRELDINQVLTIEPGVYIIDSLLAELKQDQRQSQINWNTVDVLRPFGGIRIEDNVIVHGDRIENMTRNLGLNR.

Mn(2+)-binding residues include D244, D255, H335, E380, and E419.

It belongs to the peptidase M24B family. Bacterial-type prolidase subfamily. It depends on Mn(2+) as a cofactor.

It catalyses the reaction Xaa-L-Pro dipeptide + H2O = an L-alpha-amino acid + L-proline. Splits dipeptides with a prolyl residue in the C-terminal position. This Shewanella pealeana (strain ATCC 700345 / ANG-SQ1) protein is Xaa-Pro dipeptidase.